The chain runs to 382 residues: Na(+)/H(+) antiporter NhaA 2 (382 aa).

The next 11 membrane-spanning stretches (helical) occupy residues 7 to 27, 58 to 78, 94 to 114, 124 to 144, 153 to 173, 178 to 198, 199 to 219, 255 to 275, 291 to 311, 327 to 347, and 361 to 381; these read MVLSETFPGILLIFFTFLALL, LDLWINDGLIAIFFLCIGLEL, SLPIFGALGGMITPALIFAAI, GWAIPTATDIAFAVGILMLLG, LFLLSLAIFDDLGAIVIIALF, LSALAIIICLFCIFALLLLNY, YHITHLSLYVLVGVVLWIAML, NPWVVYFILPLFAFANAGIDI, IILGLFLGKQLGVFTFCFIAI, FYGICILTGIGFTMSLFIDGL, and LAILIASFLSAIVGFIYLKIV.

This sequence belongs to the NhaA Na(+)/H(+) (TC 2.A.33) antiporter family.

The protein localises to the cell inner membrane. It carries out the reaction Na(+)(in) + 2 H(+)(out) = Na(+)(out) + 2 H(+)(in). Its function is as follows. Na(+)/H(+) antiporter that extrudes sodium in exchange for external protons. This is Na(+)/H(+) antiporter NhaA 2 from Campylobacter jejuni subsp. jejuni serotype O:6 (strain 81116 / NCTC 11828).